The primary structure comprises 897 residues: 3'-5' exonuclease DinG (897 aa).

The region spanning 8-161 (VVDLETTGNQ…DEDAATTAKL (154 aa)) is the Exonuclease domain. The 256-residue stretch at 241–496 (SKAVDQLGLT…KAIDQLEKQR (256 aa)) folds into the Helicase ATP-binding domain. Position 276 to 283 (276 to 283 (ASLGSGKS)) interacts with ATP. A DEAH box motif is present at residues 448–451 (DEAH). The Helicase C-terminal domain occupies 703–893 (NIDEYVASIV…QFGKLLRQIQ (191 aa)).

It belongs to the helicase family. DinG subfamily. Type 2 sub-subfamily.

Its function is as follows. 3'-5' exonuclease. The polypeptide is 3'-5' exonuclease DinG (Staphylococcus aureus (strain MSSA476)).